The following is a 297-amino-acid chain: 4-diphosphocytidyl-2-C-methyl-D-erythritol kinase (297 aa).

Residues lysine 6 and aspartate 144 contribute to the active site.

Belongs to the GHMP kinase family. IspE subfamily.

The enzyme catalyses 4-CDP-2-C-methyl-D-erythritol + ATP = 4-CDP-2-C-methyl-D-erythritol 2-phosphate + ADP + H(+). The protein operates within isoprenoid biosynthesis; isopentenyl diphosphate biosynthesis via DXP pathway; isopentenyl diphosphate from 1-deoxy-D-xylulose 5-phosphate: step 3/6. Catalyzes the phosphorylation of the position 2 hydroxy group of 4-diphosphocytidyl-2C-methyl-D-erythritol. In Leptospira interrogans serogroup Icterohaemorrhagiae serovar Lai (strain 56601), this protein is 4-diphosphocytidyl-2-C-methyl-D-erythritol kinase.